Consider the following 860-residue polypeptide: MQEQYRPEEIESKVQLHWDEKRTFEVTEDESKEKYYCLSMLPYPSGRLHMGHVRNYTIGDVVARYQRMLGKNVLQPIGWDAFGLPAEGAAVKNNTAPAPWTYDNIAYMKNQLKTLGFGYDWSREIATCTPEYYRWEQKFFTELYKKGLVYKKTSAVNWCPNDQTVLANEQVIDGCCWRCDTKVERKEIPQWFIKITAYADELLRDLDKLDHWPDTVKTMQRNWIGRSEGVEITFDVKGYDNTLTVYTTRPDTFMGATYLAVAAGHPLAQKAAANNAELAAFIDECRNTKVAEAEMATMEKKGVDTGYKAIHPLTGEEIPVWAANFVLMEYGTGAVMAVPGHDQRDYEFASKYGLTIKPVILAADGSEPDLSEQALTEKGVLFNSGEFDGLAFEAAFNAIADKLAEKGVGERKVNYRLRDWGVSRQRYWGAPIPMVTLEDGTVLPTPEDQLPVILPEDVVMDGITSPIKADPEWAKTTVNGMPALRETDTFDTFMESSWYYARYTCPQYQEGMLDSKAANYWLPVDIYIGGIEHAIMHLLYFRFFHKLMRDAGMVTSDEPAKQLLCQGMVLADAFYYVGENGERNWVSPVDAIVERDEKGRIVKAKDAAGHELVYTGMSKMSKSKNNGIDPQVMVERYGADTVRLFMMFASPADMTLEWQESGVEGANRFIKRVWKLVYEHTAKGSVAALNVDALSEDQKALRRDVHKTIAKVTDDIGRRQTFNTAIAAIMELMNKLAKAPQEGEQDRALLQEALQAVVRMLNPFTPHVCFTLWQELGGEGDIDNAPWPVADEQAMVENTTLVVVQVNGKVRGKITVAVDATEEQVRERAGQEHLVAKYLDGVTVRKVIYVPGKLLNLVVG.

The 'HIGH' region motif lies at 42–52; the sequence is PYPSGRLHMGH. The short motif at 619–623 is the 'KMSKS' region element; the sequence is KMSKS. Residue K622 coordinates ATP.

This sequence belongs to the class-I aminoacyl-tRNA synthetase family.

It localises to the cytoplasm. The catalysed reaction is tRNA(Leu) + L-leucine + ATP = L-leucyl-tRNA(Leu) + AMP + diphosphate. The protein is Leucine--tRNA ligase of Salmonella paratyphi B (strain ATCC BAA-1250 / SPB7).